We begin with the raw amino-acid sequence, 205 residues long: Helix-loop-helix protein 4 (205 aa).

The interval 3–16 (MVVAKRNARERTRV) is basic motif. Residues 3–56 (MVVAKRNARERTRVHTVNQAFLVLKQHLPSLRQFTKRVSKLRILNAAITYIDTL) enclose the bHLH domain. Residues 17–56 (HTVNQAFLVLKQHLPSLRQFTKRVSKLRILNAAITYIDTL) are helix-loop-helix motif.

In terms of tissue distribution, expressed in the ADL sensory neurons.

It localises to the nucleus. Acts as a transcriptional regulator. May mediate transcriptional activation by binding to the E-box motif 5'-CANNTG-3'. Required for the correct morphology, terminal identity and function of the ADL sensory neurons by controlling the expression of the ADL-specific gene repertoire, including chemoreceptor encoding genes, ion channel encoding genes, neuropeptides and the neurotransmitter eat-4. Regulates the expression of the srh-234 chemoreceptor encoding gene in the ADL neurons under feeding conditions. Plays a role in the chemorepulsive response toward ascaroside pheromones mediated by the ADL sensory neurons. In Caenorhabditis elegans, this protein is Helix-loop-helix protein 4 (hlh-4).